We begin with the raw amino-acid sequence, 75 residues long: Large ribosomal subunit protein bL31 (75 aa).

It belongs to the bacterial ribosomal protein bL31 family. Type A subfamily. In terms of assembly, part of the 50S ribosomal subunit.

In terms of biological role, binds the 23S rRNA. The sequence is that of Large ribosomal subunit protein bL31 from Chlorobium limicola (strain DSM 245 / NBRC 103803 / 6330).